Consider the following 673-residue polypeptide: Zinc finger protein 16 (673 aa).

Over residues methionine 1 to glutamate 10 the composition is skewed to basic and acidic residues. The disordered stretch occupies residues methionine 1–serine 42. Residues tyrosine 62–isoleucine 210 form a necessary for transcription activation region. The C2H2-type 1; degenerate zinc finger occupies leucine 209–histidine 231. The C2H2-type 2; degenerate zinc finger occupies phenylalanine 237–histidine 259. Residue lysine 253 forms a Glycyl lysine isopeptide (Lys-Gly) (interchain with G-Cter in SUMO2) linkage. 7 C2H2-type zinc fingers span residues tyrosine 284–histidine 306, tyrosine 312–histidine 334, tyrosine 340–histidine 362, phenylalanine 368–histidine 390, tyrosine 396–histidine 418, tyrosine 424–histidine 446, and histidine 452–histidine 474. Positions arginine 332–glycine 364 are required for nuclear localization. Residues serine 464–alanine 494 form a required for nuclear localization region. Lysine 478 is modified (N6-acetyllysine). C2H2-type zinc fingers lie at residues tyrosine 480–histidine 502, tyrosine 508–histidine 530, tyrosine 536–histidine 558, histidine 564–histidine 586, tyrosine 592–histidine 614, tyrosine 620–histidine 642, and tyrosine 648–histidine 670.

Belongs to the krueppel C2H2-type zinc-finger protein family. In terms of assembly, interacts with INCA1; the interaction inhibits INCA1 activity and induces the cell cycle process.

Its subcellular location is the nucleus. Its function is as follows. Acts as a transcriptional activator. Promotes cell proliferation by facilitating the cell cycle phase transition from the S to G2/M phase. Involved in both the hemin- and phorbol myristate acetate (PMA)-induced erythroid and megakaryocytic differentiation, respectively. Also plays a role as an inhibitor of cell apoptosis. The sequence is that of Zinc finger protein 16 (ZNF16) from Pan paniscus (Pygmy chimpanzee).